Consider the following 582-residue polypeptide: BTB/POZ domain and ankyrin repeat-containing protein NPR1 (582 aa).

The span at 1–18 (MEPPTSHVTNAFSDSDSA) shows a compositional bias: polar residues. Positions 1-25 (MEPPTSHVTNAFSDSDSASVEEGGA) are disordered. One can recognise a BTB domain in the interval 55–140 (ADARIAVPGG…VLDYLYSGRV (86 aa)). Residues 147 to 161 (ACLCVDEDCAHVGCH) form a C2HC NPR-type zinc finger. Positions 150, 155, 157, and 160 each coordinate Zn(2+). ANK repeat units lie at residues 229–258 (RSNL…SLGL), 269–299 (KHVR…NLDD), 301–328 (FALH…DVNH), and 332–361 (RGYT…RPAD). The interval 391-526 (PSPKDRLCIE…VLDKIMDDET (136 aa)) is salicylic acid-binding core (SBC). Residue R436 coordinates salicylate. The disordered stretch occupies residues 551 to 582 (QKAFHEDKEENDRSGLSSSSSSTSIGAIRPRR). The span at 553 to 563 (AFHEDKEENDR) shows a compositional bias: basic and acidic residues. Over residues 564–574 (SGLSSSSSSTS) the composition is skewed to low complexity.

This sequence belongs to the plant 'ANKYRIN-BTB/POZ' family. 'NPR1-like' subfamily. Oligomer in an uninduced state; disulfide-linked. Forms activated monomer upon changes in cellular redox potential. Interacts with TGA2.1, TGA2.2, TGA2.3, LG2, TGAL1 and TGAL4. Interacts with NRR, RH1, RH2 and RH3.

The protein resides in the cytoplasm. It localises to the nucleus. The protein localises to the nuclear body. It functions in the pathway protein modification; protein ubiquitination. Its function is as follows. Salicylic acid (SA)-binding substrate-specific adapter of an E3 ubiquitin-protein ligase complex (CUL3-RBX1-BTB) which mediates the ubiquitination and subsequent proteasomal degradation of target proteins. Transcription cofactor that represses gene expression in the absence of salicylic acid (SA), when attached to negative cis-elements (W-box) with WRKY transcription factors, but stimulates gene expression upon activation by SA, when sumoylated and attached to positive cis-elements (as-1) with TGA transcription factors, thus confering immunity through a series of gene regulations ending in a significant increase in antimicrobial and defense genes expression. Key positive factor of disease resistance. Plays an essential role in benzothiadiazole (BTH)-induced resistance to the blast fungus disease caused by Magnaporthe oryzae. Involved in defense response against the bacterial blight disease caused by Xanthomonas oryzae pv. oryzae (Xoo). Over-expression of NPR1/NH1 confers disease resistance to Xoo, but also enhances herbivore susceptibility. Functions as a transcriptional coactivator of TGA2.1 and LG2 in vitro. Involved in defense response against herbivore. Plants silencing NPR1/NH1 have increased herbivore-induced trypsin proteinase inhibitors and volatiles, which reduces the performance of the striped stem borer (SSB) Chilo suppressalis. This chain is BTB/POZ domain and ankyrin repeat-containing protein NPR1, found in Oryza sativa subsp. japonica (Rice).